Here is a 234-residue protein sequence, read N- to C-terminus: Arsenate respiratory reductase iron-sulfur subunit ArrB (234 aa).

4Fe-4S ferredoxin-type domains follow at residues 3-32, 48-79, and 80-109; these read LGMV…NDGI, VKYT…KDKR, and GLTL…FNAA. Positions 12, 15, 18, 22, 57, 60, 65, 69, 89, 92, 95, 99, 164, 167, 179, and 183 each coordinate [4Fe-4S] cluster.

As to quaternary structure, heterodimer composed of one large subunit (ArrA) and one small subunit (ArrB). [4Fe-4S] cluster serves as cofactor.

The protein localises to the periplasm. Phosphate is a competitive inhibitor. In terms of biological role, component of the arsenate respiratory reductase (Arr) complex, which catalyzes the reduction of arsenate (As(V)) to arsenite (As(III)). ArrB is probably the electron transfer subunit. The periplasmic localization of this complex may allow the cell to couple arsenate reduction to energy production before arsenate can be transported to the cell cytoplasm and enter the ars detoxification pathway, an energy-requiring process. The protein is Arsenate respiratory reductase iron-sulfur subunit ArrB of Shewanella sp. (strain ANA-3).